Consider the following 226-residue polypeptide: MNENLFASFAAPTILGLPAAVLIILFPPLLVPTSKHLINNRLITTQQWLIQLTSKQMMTMHSTKGRTWSLMLVSLIIFITTTNLLGLLPHSFTPTTQLSMNLAMAIPLWAGAVVMGFRFKTKNALAHFLPQGTPTPLIPMLVIIETISLLIQPMALAVRLTANITAGHLLMHLIGSATLALSTINLPYALIIFTILILLTILEIAVALIQAYVFTLLVSLYLHDNT.

6 helical membrane passes run Phe-6–Phe-26, Trp-68–Leu-88, Gln-97–Phe-117, Ile-138–Val-158, Ile-164–Ile-184, and Ala-189–Ile-209.

Belongs to the ATPase A chain family. Component of the ATP synthase complex composed at least of ATP5F1A/subunit alpha, ATP5F1B/subunit beta, ATP5MC1/subunit c (homooctomer), MT-ATP6/subunit a, MT-ATP8/subunit 8, ATP5ME/subunit e, ATP5MF/subunit f, ATP5MG/subunit g, ATP5MK/subunit k, ATP5MJ/subunit j, ATP5F1C/subunit gamma, ATP5F1D/subunit delta, ATP5F1E/subunit epsilon, ATP5PF/subunit F6, ATP5PB/subunit b, ATP5PD/subunit d, ATP5PO/subunit OSCP. ATP synthase complex consists of a soluble F(1) head domain (subunits alpha(3) and beta(3)) - the catalytic core - and a membrane F(0) domain - the membrane proton channel (subunits c, a, 8, e, f, g, k and j). These two domains are linked by a central stalk (subunits gamma, delta, and epsilon) rotating inside the F1 region and a stationary peripheral stalk (subunits F6, b, d, and OSCP). Interacts with DNAJC30; interaction is direct.

Its subcellular location is the mitochondrion inner membrane. The enzyme catalyses H(+)(in) = H(+)(out). Its function is as follows. Subunit a, of the mitochondrial membrane ATP synthase complex (F(1)F(0) ATP synthase or Complex V) that produces ATP from ADP in the presence of a proton gradient across the membrane which is generated by electron transport complexes of the respiratory chain. ATP synthase complex consist of a soluble F(1) head domain - the catalytic core - and a membrane F(1) domain - the membrane proton channel. These two domains are linked by a central stalk rotating inside the F(1) region and a stationary peripheral stalk. During catalysis, ATP synthesis in the catalytic domain of F(1) is coupled via a rotary mechanism of the central stalk subunits to proton translocation. With the subunit c (ATP5MC1), forms the proton-conducting channel in the F(0) domain, that contains two crucial half-channels (inlet and outlet) that facilitate proton movement from the mitochondrial intermembrane space (IMS) into the matrix. Protons are taken up via the inlet half-channel and released through the outlet half-channel, following a Grotthuss mechanism. This chain is ATP synthase F(0) complex subunit a, found in Pan troglodytes (Chimpanzee).